Reading from the N-terminus, the 175-residue chain is Large ribosomal subunit protein uL10 (175 aa).

Belongs to the universal ribosomal protein uL10 family. As to quaternary structure, part of the ribosomal stalk of the 50S ribosomal subunit. The N-terminus interacts with L11 and the large rRNA to form the base of the stalk. The C-terminus forms an elongated spine to which L12 dimers bind in a sequential fashion forming a multimeric L10(L12)X complex.

Its function is as follows. Forms part of the ribosomal stalk, playing a central role in the interaction of the ribosome with GTP-bound translation factors. This chain is Large ribosomal subunit protein uL10, found in Psychrobacter sp. (strain PRwf-1).